The following is a 1433-amino-acid chain: DNA-directed RNA polymerase subunit beta' (1433 aa).

Zn(2+) contacts are provided by cysteine 66, cysteine 68, cysteine 81, and cysteine 84. Positions 474, 476, and 478 each coordinate Mg(2+). Positions 823, 897, 904, and 907 each coordinate Zn(2+).

The protein belongs to the RNA polymerase beta' chain family. As to quaternary structure, the RNAP catalytic core consists of 2 alpha, 1 beta, 1 beta' and 1 omega subunit. When a sigma factor is associated with the core the holoenzyme is formed, which can initiate transcription. It depends on Mg(2+) as a cofactor. The cofactor is Zn(2+).

The enzyme catalyses RNA(n) + a ribonucleoside 5'-triphosphate = RNA(n+1) + diphosphate. DNA-dependent RNA polymerase catalyzes the transcription of DNA into RNA using the four ribonucleoside triphosphates as substrates. In Amoebophilus asiaticus (strain 5a2), this protein is DNA-directed RNA polymerase subunit beta'.